The sequence spans 239 residues: Sugar fermentation stimulation protein homolog (239 aa).

This sequence belongs to the SfsA family.

The sequence is that of Sugar fermentation stimulation protein homolog from Methylobacterium sp. (strain 4-46).